Here is a 117-residue protein sequence, read N- to C-terminus: MVTPRMLSALSAVLLLVLTASSSARSFDASPSATSGNHSLNKRSLFDPACTGIYDRQLLRKLGRLCDDCYNVFREPKVATGCRSNCYHNLIFLDCLEYLIPSHLQEEHMAAMQTVGK.

A signal peptide spans 1-24; the sequence is MVTPRMLSALSAVLLLVLTASSSA. 3 disulfide bridges follow: cysteine 50–cysteine 86, cysteine 66–cysteine 82, and cysteine 69–cysteine 95. A Valine amide modification is found at valine 115.

This sequence belongs to the arthropod CHH/MIH/GIH/VIH hormone family. In terms of tissue distribution, produced by the medulla terminalis X-organ in the eyestalks and transported to the sinus gland where they are stored and released.

Its subcellular location is the secreted. In terms of biological role, hormone found in the sinus gland of isopods and decapods which controls the blood sugar level. Has a secretagogue action over the amylase released from the midgut gland. May act as a stress hormone and may be involved in the control of molting and reproduction. This Penaeus japonicus (Kuruma prawn) protein is Crustacean hyperglycemic hormones 3.